Consider the following 143-residue polypeptide: Large ribosomal subunit protein uL15 (143 aa).

2 stretches are compositionally biased toward basic residues: residues 1–13 (MIRK…KMRG) and 23–38 (KKHR…GNAG). The segment at 1-38 (MIRKSKKITKMRGSRTCGYGEAKKHRGAGHRGGRGNAG) is disordered.

This sequence belongs to the universal ribosomal protein uL15 family. Part of the 50S ribosomal subunit.

Its function is as follows. Binds to the 23S rRNA. In Methanococcus maripaludis (strain C7 / ATCC BAA-1331), this protein is Large ribosomal subunit protein uL15.